We begin with the raw amino-acid sequence, 288 residues long: DegV domain-containing protein MYPU_3590 (288 aa).

Residues 3 to 275 (IAIVIDSSSG…LGAIAISLVK (273 aa)) form the DegV domain. Residues S61 and S92 each coordinate hexadecanoate.

In terms of biological role, may bind long-chain fatty acids, such as palmitate, and may play a role in lipid transport or fatty acid metabolism. This is DegV domain-containing protein MYPU_3590 from Mycoplasmopsis pulmonis (strain UAB CTIP) (Mycoplasma pulmonis).